The following is a 625-amino-acid chain: Complex I assembly factor ACAD9, mitochondrial (625 aa).

The N-terminal 41 residues, 1–41 (MSGYVLFSRGATAAAAAARASRVLRVFTERRRTLHTSLQSC), are a transit peptide targeting the mitochondrion. At Lys-45 the chain carries N6-acetyllysine. Position 96 is an N6-succinyllysine (Lys-96). The Proton acceptor role is filled by Glu-430. A Phosphothreonine modification is found at Thr-482. Lys-525 carries the post-translational modification N6-acetyllysine; alternate. An N6-succinyllysine; alternate modification is found at Lys-525.

It belongs to the acyl-CoA dehydrogenase family. Homodimer. Interacts with NDUFAF1 and ECSIT. Part of the mitochondrial complex I assembly/MCIA complex that comprises at least the core subunits TMEM126B, NDUFAF1, ECSIT and ACAD9 and complement subunits such as COA1 and TMEM186. Interacts with TMEM70 and TMEM242. FAD is required as a cofactor.

It is found in the mitochondrion inner membrane. The catalysed reaction is eicosanoyl-CoA + oxidized [electron-transfer flavoprotein] + H(+) = (2E)-eicosenoyl-CoA + reduced [electron-transfer flavoprotein]. It catalyses the reaction octadecanoyl-CoA + oxidized [electron-transfer flavoprotein] + H(+) = (2E)-octadecenoyl-CoA + reduced [electron-transfer flavoprotein]. It carries out the reaction oxidized [electron-transfer flavoprotein] + hexadecanoyl-CoA + H(+) = (2E)-hexadecenoyl-CoA + reduced [electron-transfer flavoprotein]. The enzyme catalyses decanoyl-CoA + oxidized [electron-transfer flavoprotein] + H(+) = (2E)-decenoyl-CoA + reduced [electron-transfer flavoprotein]. The catalysed reaction is nonanoyl-CoA + oxidized [electron-transfer flavoprotein] + H(+) = (2E)-nonenoyl-CoA + reduced [electron-transfer flavoprotein]. It catalyses the reaction pentadecanoyl-CoA + oxidized [electron-transfer flavoprotein] + H(+) = (2E)-pentadecenoyl-CoA + reduced [electron-transfer flavoprotein]. It carries out the reaction undecanoyl-CoA + oxidized [electron-transfer flavoprotein] + H(+) = trans-2-undecenoyl-CoA + reduced [electron-transfer flavoprotein]. The enzyme catalyses (9Z)-hexadecenoyl-CoA + oxidized [electron-transfer flavoprotein] + H(+) = (2E,9Z)-hexadecadienoyl-CoA + reduced [electron-transfer flavoprotein]. The catalysed reaction is heptadecanoyl-CoA + oxidized [electron-transfer flavoprotein] + H(+) = trans-2-heptadecenoyl-CoA + reduced [electron-transfer flavoprotein]. It catalyses the reaction (9E)-octadecenoyl-CoA + oxidized [electron-transfer flavoprotein] + H(+) = (2E,9E)-octadecadienoyl-CoA + reduced [electron-transfer flavoprotein]. It carries out the reaction oxidized [electron-transfer flavoprotein] + (9Z)-octadecenoyl-CoA + H(+) = (2E,9Z)-octadecadienoyl-CoA + reduced [electron-transfer flavoprotein]. The enzyme catalyses (9Z,12Z)-octadecadienoyl-CoA + oxidized [electron-transfer flavoprotein] + H(+) = (2E,9Z,12Z)-octadecatrienoyl-CoA + reduced [electron-transfer flavoprotein]. The catalysed reaction is (4Z,7Z,10Z,13Z,16Z,19Z)-docosahexaenoyl-CoA + oxidized [electron-transfer flavoprotein] + H(+) = (2E,4Z,7Z,10Z,13Z,16Z,19Z)-docosaheptaenoyl-CoA + reduced [electron-transfer flavoprotein]. It catalyses the reaction tetradecanoyl-CoA + oxidized [electron-transfer flavoprotein] + H(+) = (2E)-tetradecenoyl-CoA + reduced [electron-transfer flavoprotein]. Its function is as follows. As part of the MCIA complex, primarily participates in the assembly of the mitochondrial complex I and therefore plays a role in oxidative phosphorylation. This moonlighting protein also has a dehydrogenase activity toward a broad range of substrates with greater specificity for long-chain unsaturated acyl-CoAs. However, in vivo, it does not seem to play a primary role in fatty acid oxidation. In addition, the function in complex I assembly is independent of the dehydrogenase activity of the protein. The chain is Complex I assembly factor ACAD9, mitochondrial from Rattus norvegicus (Rat).